Here is a 403-residue protein sequence, read N- to C-terminus: Phosphopentomutase (403 aa).

Residues Asp13, Asp298, His303, Asp339, His340, and His351 each coordinate Mn(2+).

It belongs to the phosphopentomutase family. Requires Mn(2+) as cofactor.

It localises to the cytoplasm. It carries out the reaction 2-deoxy-alpha-D-ribose 1-phosphate = 2-deoxy-D-ribose 5-phosphate. The enzyme catalyses alpha-D-ribose 1-phosphate = D-ribose 5-phosphate. The protein operates within carbohydrate degradation; 2-deoxy-D-ribose 1-phosphate degradation; D-glyceraldehyde 3-phosphate and acetaldehyde from 2-deoxy-alpha-D-ribose 1-phosphate: step 1/2. Functionally, isomerase that catalyzes the conversion of deoxy-ribose 1-phosphate (dRib-1-P) and ribose 1-phosphate (Rib-1-P) to deoxy-ribose 5-phosphate (dRib-5-P) and ribose 5-phosphate (Rib-5-P), respectively. This Streptococcus pneumoniae (strain JJA) protein is Phosphopentomutase.